A 320-amino-acid chain; its full sequence is tRNA-cytidine(32) 2-sulfurtransferase (320 aa).

Residues 54–59 (SGGKDS) carry the PP-loop motif motif. [4Fe-4S] cluster is bound by residues Cys-129, Cys-132, and Cys-220.

This sequence belongs to the TtcA family. In terms of assembly, homodimer. It depends on Mg(2+) as a cofactor. [4Fe-4S] cluster is required as a cofactor.

Its subcellular location is the cytoplasm. It catalyses the reaction cytidine(32) in tRNA + S-sulfanyl-L-cysteinyl-[cysteine desulfurase] + AH2 + ATP = 2-thiocytidine(32) in tRNA + L-cysteinyl-[cysteine desulfurase] + A + AMP + diphosphate + H(+). The protein operates within tRNA modification. Its function is as follows. Catalyzes the ATP-dependent 2-thiolation of cytidine in position 32 of tRNA, to form 2-thiocytidine (s(2)C32). The sulfur atoms are provided by the cysteine/cysteine desulfurase (IscS) system. This is tRNA-cytidine(32) 2-sulfurtransferase from Bordetella bronchiseptica (strain ATCC BAA-588 / NCTC 13252 / RB50) (Alcaligenes bronchisepticus).